We begin with the raw amino-acid sequence, 396 residues long: Phosphoglycerate kinase (396 aa).

Residues 21–23 (DFN), arginine 36, 59–62 (HLGR), arginine 118, and arginine 151 each bind substrate. ATP-binding positions include lysine 201, glycine 292, glutamate 323, and 349–352 (GGDS).

This sequence belongs to the phosphoglycerate kinase family. Monomer.

Its subcellular location is the cytoplasm. The enzyme catalyses (2R)-3-phosphoglycerate + ATP = (2R)-3-phospho-glyceroyl phosphate + ADP. It participates in carbohydrate degradation; glycolysis; pyruvate from D-glyceraldehyde 3-phosphate: step 2/5. The polypeptide is Phosphoglycerate kinase (Leptospira interrogans serogroup Icterohaemorrhagiae serovar Lai (strain 56601)).